A 452-amino-acid chain; its full sequence is Tubulin beta-2 chain (452 aa).

GTP-binding residues include Q11, E74, S143, V147, T148, G149, N209, and N231. Residue E74 participates in Mg(2+) binding. Positions 431 to 452 (QEATADDEAEFEEEGEVEGEYD) are disordered. Over residues 434–452 (TADDEAEFEEEGEVEGEYD) the composition is skewed to acidic residues.

Belongs to the tubulin family. Dimer of alpha and beta chains. A typical microtubule is a hollow water-filled tube with an outer diameter of 25 nm and an inner diameter of 15 nM. Alpha-beta heterodimers associate head-to-tail to form protofilaments running lengthwise along the microtubule wall with the beta-tubulin subunit facing the microtubule plus end conferring a structural polarity. Microtubules usually have 13 protofilaments but different protofilament numbers can be found in some organisms and specialized cells. The cofactor is Mg(2+).

The protein localises to the cytoplasm. It localises to the cytoskeleton. In terms of biological role, tubulin is the major constituent of microtubules, a cylinder consisting of laterally associated linear protofilaments composed of alpha- and beta-tubulin heterodimers. Microtubules grow by the addition of GTP-tubulin dimers to the microtubule end, where a stabilizing cap forms. Below the cap, tubulin dimers are in GDP-bound state, owing to GTPase activity of alpha-tubulin. The polypeptide is Tubulin beta-2 chain (Homarus americanus (American lobster)).